The primary structure comprises 390 residues: MYLKHLHLRQFRNYRDQQVKFDGAKTILLGDNAQGKSNLLESVELLSTLKSHRAIRDRDLILDSKQASKIQASLERQLGNIDLALTLRSQGKRTVAVNGETISRHLDFLSILNVVHFSSLDLDLVRGGPEVRRYWLDRLLVQLEPVYAHILLQYNQVLRQRNALLKKIRQQKMAAETTGSSPSILTQELALWDAQLATTGSRVIRRRQRLLQKLAPLAGEWHCAISGSMEVFKMEYLANVIVDSNELIIQDSLEGVRQAFLEKIKVRAIAEQYQGTTVVGPHRDDVIFTINDTPARQYGSQGQQRTLVLALKLAELQLIEEVVQEPPLLLLDDVLAELDLHRQNQLLEAISNRFQTLITTTHLGCFDGQWLQDTQILSVKSGNISSFLDF.

30–37 lines the ATP pocket; the sequence is GDNAQGKS.

Belongs to the RecF family.

The protein localises to the cytoplasm. In terms of biological role, the RecF protein is involved in DNA metabolism; it is required for DNA replication and normal SOS inducibility. RecF binds preferentially to single-stranded, linear DNA. It also seems to bind ATP. This Trichodesmium erythraeum (strain IMS101) protein is DNA replication and repair protein RecF.